We begin with the raw amino-acid sequence, 298 residues long: Elongation factor Ts (298 aa).

Residues 78–81 (TDFV) form an involved in Mg(2+) ion dislocation from EF-Tu region.

This sequence belongs to the EF-Ts family.

It localises to the cytoplasm. In terms of biological role, associates with the EF-Tu.GDP complex and induces the exchange of GDP to GTP. It remains bound to the aminoacyl-tRNA.EF-Tu.GTP complex up to the GTP hydrolysis stage on the ribosome. The chain is Elongation factor Ts from Mycoplasmopsis agalactiae (strain NCTC 10123 / CIP 59.7 / PG2) (Mycoplasma agalactiae).